The chain runs to 785 residues: Phenylalanine--tRNA ligase beta subunit (785 aa).

In terms of domain architecture, tRNA-binding spans 39–150 (RTWAAGVVVG…ASLPLGLDVG (112 aa)). The B5 domain maps to 400–476 (RENRVVSLRP…RVVGYDRFAP (77 aa)). Residues D454, D460, E463, and E464 each contribute to the Mg(2+) site. The 93-residue stretch at 692 to 784 (SPFPPAARDL…LAERYSVDLR (93 aa)) folds into the FDX-ACB domain.

It belongs to the phenylalanyl-tRNA synthetase beta subunit family. Type 1 subfamily. In terms of assembly, tetramer of two alpha and two beta subunits. Mg(2+) serves as cofactor.

It is found in the cytoplasm. The enzyme catalyses tRNA(Phe) + L-phenylalanine + ATP = L-phenylalanyl-tRNA(Phe) + AMP + diphosphate + H(+). The polypeptide is Phenylalanine--tRNA ligase beta subunit (Gloeobacter violaceus (strain ATCC 29082 / PCC 7421)).